Here is a 344-residue protein sequence, read N- to C-terminus: Pyruvate dehydrogenase E1 component subunit alpha (344 aa).

Pyruvate is bound by residues histidine 55, tyrosine 81, arginine 82, alanine 130, isoleucine 132, aspartate 168, glycine 169, and asparagine 197. Positions 81, 82, 130, 132, 168, 169, 197, and 266 each coordinate thiamine diphosphate. A Mg(2+)-binding site is contributed by aspartate 168. Asparagine 197 contacts Mg(2+).

In terms of assembly, heterodimer of an alpha and a beta chain. Requires thiamine diphosphate as cofactor. The cofactor is Mg(2+).

The protein localises to the plastid. It is found in the chloroplast. The enzyme catalyses N(6)-[(R)-lipoyl]-L-lysyl-[protein] + pyruvate + H(+) = N(6)-[(R)-S(8)-acetyldihydrolipoyl]-L-lysyl-[protein] + CO2. Functionally, the pyruvate dehydrogenase complex catalyzes the overall conversion of pyruvate to acetyl-CoA and CO(2). It contains multiple copies of three enzymatic components: pyruvate dehydrogenase (E1), dihydrolipoamide acetyltransferase (E2) and lipoamide dehydrogenase (E3). The polypeptide is Pyruvate dehydrogenase E1 component subunit alpha (pdhA) (Porphyra purpurea (Red seaweed)).